A 241-amino-acid chain; its full sequence is Small ribosomal subunit protein uS3 (241 aa).

Residues 39–107 (IRTYLKKELY…PLSVNIKEEK (69 aa)) form the KH type-2 domain. The disordered stretch occupies residues 214–241 (AEVKEEQQKEGARRPKRAPKRENSGKAE). A compositionally biased stretch (basic and acidic residues) spans 215-226 (EVKEEQQKEGAR).

The protein belongs to the universal ribosomal protein uS3 family. As to quaternary structure, part of the 30S ribosomal subunit. Forms a tight complex with proteins S10 and S14.

In terms of biological role, binds the lower part of the 30S subunit head. Binds mRNA in the 70S ribosome, positioning it for translation. In Sulfurimonas denitrificans (strain ATCC 33889 / DSM 1251) (Thiomicrospira denitrificans (strain ATCC 33889 / DSM 1251)), this protein is Small ribosomal subunit protein uS3.